Reading from the N-terminus, the 117-residue chain is Large ribosomal subunit protein uL18 (117 aa).

It belongs to the universal ribosomal protein uL18 family. Part of the 50S ribosomal subunit; part of the 5S rRNA/L5/L18/L25 subcomplex. Contacts the 5S and 23S rRNAs.

Functionally, this is one of the proteins that bind and probably mediate the attachment of the 5S RNA into the large ribosomal subunit, where it forms part of the central protuberance. The sequence is that of Large ribosomal subunit protein uL18 from Actinobacillus succinogenes (strain ATCC 55618 / DSM 22257 / CCUG 43843 / 130Z).